Consider the following 91-residue polypeptide: Small ribosomal subunit protein uS19 (91 aa).

The protein belongs to the universal ribosomal protein uS19 family.

Protein S19 forms a complex with S13 that binds strongly to the 16S ribosomal RNA. The protein is Small ribosomal subunit protein uS19 of Bordetella pertussis (strain Tohama I / ATCC BAA-589 / NCTC 13251).